A 177-amino-acid polypeptide reads, in one-letter code: Large ribosomal subunit protein uL6 (177 aa).

This sequence belongs to the universal ribosomal protein uL6 family. In terms of assembly, part of the 50S ribosomal subunit.

This protein binds to the 23S rRNA, and is important in its secondary structure. It is located near the subunit interface in the base of the L7/L12 stalk, and near the tRNA binding site of the peptidyltransferase center. In Bradyrhizobium diazoefficiens (strain JCM 10833 / BCRC 13528 / IAM 13628 / NBRC 14792 / USDA 110), this protein is Large ribosomal subunit protein uL6.